The following is a 393-amino-acid chain: Homoserine O-succinyltransferase (393 aa).

The region spanning 62-372 (NAVLVCHALN…PHGHDAFLLD (311 aa)) is the AB hydrolase-1 domain. Residue S168 is the Nucleophile of the active site. R238 contributes to the substrate binding site. Active-site residues include D333 and H366. Substrate is bound at residue D367.

It belongs to the AB hydrolase superfamily. MetX family. Homodimer.

The protein resides in the cytoplasm. It catalyses the reaction L-homoserine + succinyl-CoA = O-succinyl-L-homoserine + CoA. It participates in amino-acid biosynthesis; L-methionine biosynthesis via de novo pathway; O-succinyl-L-homoserine from L-homoserine: step 1/1. In terms of biological role, transfers a succinyl group from succinyl-CoA to L-homoserine, forming succinyl-L-homoserine. The chain is Homoserine O-succinyltransferase from Cupriavidus taiwanensis (strain DSM 17343 / BCRC 17206 / CCUG 44338 / CIP 107171 / LMG 19424 / R1) (Ralstonia taiwanensis (strain LMG 19424)).